Consider the following 322-residue polypeptide: Breast cancer metastasis-suppressor 1-like protein (322 aa).

A compositionally biased stretch (basic and acidic residues) spans 1–16 (MPVHSREKKESNHNDM). The disordered stretch occupies residues 1–56 (MPVHSREKKESNHNDMEVDYPENEGSSSEEDDSDSSSGSEEGDSSEMDDEDCERRR). Residues 17-51 (EVDYPENEGSSSEEDDSDSSSGSEEGDSSEMDDED) are compositionally biased toward acidic residues. 2 coiled-coil regions span residues 50–99 (EDCE…QAQE) and 147–178 (EKLL…ITSE).

Belongs to the BRMS1 family.

It is found in the nucleus. Its function is as follows. Involved in the histone deacetylase (HDAC1)-dependent transcriptional repression activity. The sequence is that of Breast cancer metastasis-suppressor 1-like protein (brms1l) from Xenopus laevis (African clawed frog).